Reading from the N-terminus, the 243-residue chain is tRNA pseudouridine synthase A (243 aa).

The Nucleophile role is filled by aspartate 51. Tyrosine 111 is a binding site for substrate.

This sequence belongs to the tRNA pseudouridine synthase TruA family. As to quaternary structure, homodimer.

It catalyses the reaction uridine(38/39/40) in tRNA = pseudouridine(38/39/40) in tRNA. Its function is as follows. Formation of pseudouridine at positions 38, 39 and 40 in the anticodon stem and loop of transfer RNAs. In Neorickettsia sennetsu (strain ATCC VR-367 / Miyayama) (Ehrlichia sennetsu), this protein is tRNA pseudouridine synthase A.